A 478-amino-acid chain; its full sequence is Calcium/calmodulin-dependent protein kinase type II subunit alpha (478 aa).

At Tyr-13 the chain carries Phosphotyrosine. In terms of domain architecture, Protein kinase spans 13-271 (YQLFEELGKG…AAEALKHPWI (259 aa)). ATP is bound by residues 19-27 (LGKGAFSVV) and Lys-42. Asp-135 serves as the catalytic Proton acceptor. Residue Ser-257 is modified to Phosphoserine. The residue at position 286 (Thr-286) is a Phosphothreonine; by autocatalysis. The calmodulin-binding stretch occupies residues 290–300 (LKKFNARRKLK). Residues 310–320 (TRNFSGGKSGG) form an interaction with BAALC region. Residues 314–341 (SGGKSGGNKKNDGVKESSESTNTTIEDE) form a disordered region. The segment covering 322 to 331 (KKNDGVKESS) has biased composition (basic and acidic residues). Residues Ser-330, Ser-331, and Ser-333 each carry the phosphoserine modification. A phosphothreonine mark is found at Thr-336 and Thr-337. Ser-404 carries the phosphoserine modification.

This sequence belongs to the protein kinase superfamily. CAMK Ser/Thr protein kinase family. CaMK subfamily. There are 4 genes encoding calcium/calmodulin-dependent protein kinase type II chains: CAMK2A, CAMK2B, CAMK2G and CAMK2D. The corresponding proteins assemble into homo- or heteromultimeric holoenzymes composed of 12 subunits with two hexameric rings stacked one on top of the other. Interacts with BAALC. Interacts with MPDZ. Interacts with SYN1. Interacts with CAMK2N2. Interacts with SYNGAP1. Interacts with SYNPO2. Interacts with SHANK3. Interacts with GRIN2B. Interacts with CACNB2. Interacts with LRRC7. Interacts with GRM5. Interacts with DAGLA (via C-terminal); this interaction is enhanced by autophosphorylation of CAMK2A at Thr-286. Interacts with CAMK2N1; this interaction requires CAMK2A activation by Ca(2+). Requires Mg(2+) as cofactor. Autophosphorylation of Thr-286 following activation by Ca(2+)/calmodulin. Phosphorylation of Thr-286 locks the kinase into an activated state. Post-translationally, palmitoylated. Probably palmitoylated by ZDHHC3 and ZDHHC7. Expressed in brain. In terms of tissue distribution, expressed in skeletal muscle.

The protein localises to the cytoplasm. The protein resides in the synapse. It is found in the postsynaptic density. Its subcellular location is the cell projection. It localises to the dendritic spine. The protein localises to the dendrite. It carries out the reaction L-seryl-[protein] + ATP = O-phospho-L-seryl-[protein] + ADP + H(+). The catalysed reaction is L-threonyl-[protein] + ATP = O-phospho-L-threonyl-[protein] + ADP + H(+). With respect to regulation, activated by Ca(2+)/calmodulin. Binding of calmodulin results in conformational change that relieves intrasteric autoinhibition and allows autophosphorylation of Thr-286 which turns the kinase in a constitutively active form and confers to the kinase a Ca(2+)-independent activity. In terms of biological role, calcium/calmodulin-dependent protein kinase that functions autonomously after Ca(2+)/calmodulin-binding and autophosphorylation, and is involved in various processes, such as synaptic plasticity, neurotransmitter release and long-term potentiation. Member of the NMDAR signaling complex in excitatory synapses, it regulates NMDAR-dependent potentiation of the AMPAR and therefore excitatory synaptic transmission. Regulates dendritic spine development. Also regulates the migration of developing neurons. Phosphorylates the transcription factor FOXO3 to activate its transcriptional activity. Phosphorylates the transcription factor ETS1 in response to calcium signaling, thereby decreasing ETS1 affinity for DNA. In response to interferon-gamma (IFN-gamma) stimulation, catalyzes phosphorylation of STAT1, stimulating the JAK-STAT signaling pathway. In response to interferon-beta (IFN-beta) stimulation, stimulates the JAK-STAT signaling pathway. Acts as a negative regulator of 2-arachidonoylglycerol (2-AG)-mediated synaptic signaling via modulation of DAGLA activity. Its function is as follows. Has no kinase activity. In Mus musculus (Mouse), this protein is Calcium/calmodulin-dependent protein kinase type II subunit alpha (Camk2a).